Here is a 175-residue protein sequence, read N- to C-terminus: Apoptosis regulator Bcl-2 homolog (175 aa).

The chain crosses the membrane as a helical span at residues 152–174 (YYVTRYFRVAAFIITSLAVINLF).

Interacts with host BAK1 and BAX as well as other BH3-containing proteins including BIM, BID or PUMA.

The protein resides in the host membrane. Functionally, plays a role in the inhibition of host apoptosis. Interacts with host proapoptotic factors BAK1 and BAX to supposedly prevent their activation. The polypeptide is Apoptosis regulator Bcl-2 homolog (CNPV058) (Canarypox virus (CNPV)).